Consider the following 246-residue polypeptide: Probable site-specific recombinase in afa region (246 aa).

One can recognise a Tyr recombinase domain in the interval 40 to 225 (ATPAYLLAPE…FALDMAATLA (186 aa)). Active-site residues include R75, K102, H177, R180, and H203. The O-(3'-phospho-DNA)-tyrosine intermediate role is filled by Y212.

The protein belongs to the 'phage' integrase family.

This chain is Probable site-specific recombinase in afa region (int), found in Escherichia coli.